The primary structure comprises 274 residues: 2-dehydro-3-deoxyphosphooctonate aldolase (274 aa).

It belongs to the KdsA family.

Its subcellular location is the cytoplasm. The catalysed reaction is D-arabinose 5-phosphate + phosphoenolpyruvate + H2O = 3-deoxy-alpha-D-manno-2-octulosonate-8-phosphate + phosphate. Its pathway is carbohydrate biosynthesis; 3-deoxy-D-manno-octulosonate biosynthesis; 3-deoxy-D-manno-octulosonate from D-ribulose 5-phosphate: step 2/3. It participates in bacterial outer membrane biogenesis; lipopolysaccharide biosynthesis. The protein is 2-dehydro-3-deoxyphosphooctonate aldolase of Rickettsia felis (strain ATCC VR-1525 / URRWXCal2) (Rickettsia azadi).